The sequence spans 257 residues: Imidazole glycerol phosphate synthase subunit HisF (257 aa).

Active-site residues include D11 and D130.

It belongs to the HisA/HisF family. In terms of assembly, heterodimer of HisH and HisF.

Its subcellular location is the cytoplasm. The catalysed reaction is 5-[(5-phospho-1-deoxy-D-ribulos-1-ylimino)methylamino]-1-(5-phospho-beta-D-ribosyl)imidazole-4-carboxamide + L-glutamine = D-erythro-1-(imidazol-4-yl)glycerol 3-phosphate + 5-amino-1-(5-phospho-beta-D-ribosyl)imidazole-4-carboxamide + L-glutamate + H(+). It functions in the pathway amino-acid biosynthesis; L-histidine biosynthesis; L-histidine from 5-phospho-alpha-D-ribose 1-diphosphate: step 5/9. Its function is as follows. IGPS catalyzes the conversion of PRFAR and glutamine to IGP, AICAR and glutamate. The HisF subunit catalyzes the cyclization activity that produces IGP and AICAR from PRFAR using the ammonia provided by the HisH subunit. This Shewanella loihica (strain ATCC BAA-1088 / PV-4) protein is Imidazole glycerol phosphate synthase subunit HisF.